A 290-amino-acid polypeptide reads, in one-letter code: Glycine--tRNA ligase alpha subunit (290 aa).

The protein belongs to the class-II aminoacyl-tRNA synthetase family. In terms of assembly, tetramer of two alpha and two beta subunits.

Its subcellular location is the cytoplasm. It carries out the reaction tRNA(Gly) + glycine + ATP = glycyl-tRNA(Gly) + AMP + diphosphate. This Syntrophotalea carbinolica (strain DSM 2380 / NBRC 103641 / GraBd1) (Pelobacter carbinolicus) protein is Glycine--tRNA ligase alpha subunit.